The primary structure comprises 207 residues: Large ribosomal subunit protein uL3 (207 aa).

The segment at 129-152 (AGGPAGHGSRFQRHPGSIGSNTTP) is disordered.

Belongs to the universal ribosomal protein uL3 family. Part of the 50S ribosomal subunit. Forms a cluster with proteins L14 and L19.

In terms of biological role, one of the primary rRNA binding proteins, it binds directly near the 3'-end of the 23S rRNA, where it nucleates assembly of the 50S subunit. The polypeptide is Large ribosomal subunit protein uL3 (Leptospira biflexa serovar Patoc (strain Patoc 1 / ATCC 23582 / Paris)).